A 191-amino-acid chain; its full sequence is Ribosome hibernation promotion factor (191 aa).

The disordered stretch occupies residues 100 to 123 (KQRQEGRPEPLPGPAEAEVNAQGS).

It belongs to the HPF/YfiA ribosome-associated protein family. Long HPF subfamily. Interacts with 100S ribosomes.

The protein localises to the cytoplasm. Required for dimerization of active 70S ribosomes into 100S ribosomes in stationary phase; 100S ribosomes are translationally inactive and sometimes present during exponential growth. This chain is Ribosome hibernation promotion factor, found in Deinococcus radiodurans (strain ATCC 13939 / DSM 20539 / JCM 16871 / CCUG 27074 / LMG 4051 / NBRC 15346 / NCIMB 9279 / VKM B-1422 / R1).